Consider the following 138-residue polypeptide: MLQSNRLAIYAIGKIKKLWIRDGINQYKKRMPELIINELKTFNLNNLRSNNNIIICLSEEGKQFNSVELCSLLLNFKNKKINFLIGDTDGVSSDIKEKSDLVLSLSPLTFPHELARLILIEQIYRAISISNNSPYHRS.

S-adenosyl-L-methionine contacts are provided by residues Leu-57, Gly-86, and 105 to 110; that span reads LSPLTF.

This sequence belongs to the RNA methyltransferase RlmH family. As to quaternary structure, homodimer.

The protein localises to the cytoplasm. It catalyses the reaction pseudouridine(1915) in 23S rRNA + S-adenosyl-L-methionine = N(3)-methylpseudouridine(1915) in 23S rRNA + S-adenosyl-L-homocysteine + H(+). In terms of biological role, specifically methylates the pseudouridine at position 1915 (m3Psi1915) in 23S rRNA. The protein is Ribosomal RNA large subunit methyltransferase H of Prochlorococcus marinus (strain MIT 9301).